The following is a 154-amino-acid chain: MAKKKSPGTLAENRKARHDYNIEDTIEAGIVLQGTEIKSIRRGSANLKDSYAQVKNGEMYLNNMHIAPYEEGNRFNHDPLRSRKLLLHKREIFKLGEQTREIGYSIVPLKLYLKHGHCKVLLGVARGKKKYDKRQALKEKAVKRDVARDMKARY.

Belongs to the SmpB family.

It localises to the cytoplasm. Functionally, required for rescue of stalled ribosomes mediated by trans-translation. Binds to transfer-messenger RNA (tmRNA), required for stable association of tmRNA with ribosomes. tmRNA and SmpB together mimic tRNA shape, replacing the anticodon stem-loop with SmpB. tmRNA is encoded by the ssrA gene; the 2 termini fold to resemble tRNA(Ala) and it encodes a 'tag peptide', a short internal open reading frame. During trans-translation Ala-aminoacylated tmRNA acts like a tRNA, entering the A-site of stalled ribosomes, displacing the stalled mRNA. The ribosome then switches to translate the ORF on the tmRNA; the nascent peptide is terminated with the 'tag peptide' encoded by the tmRNA and targeted for degradation. The ribosome is freed to recommence translation, which seems to be the essential function of trans-translation. This chain is SsrA-binding protein, found in Staphylococcus aureus (strain Mu3 / ATCC 700698).